A 407-amino-acid polypeptide reads, in one-letter code: tRNA(Ile2) 2-agmatinylcytidine synthetase TiaS (407 aa).

It belongs to the TiaS family.

The protein resides in the cytoplasm. It carries out the reaction cytidine(34) in tRNA(Ile2) + agmatine + ATP + H2O = 2-agmatinylcytidine(34) in tRNA(Ile2) + AMP + 2 phosphate + 2 H(+). ATP-dependent agmatine transferase that catalyzes the formation of 2-agmatinylcytidine (agm2C) at the wobble position (C34) of tRNA(Ile2), converting the codon specificity from AUG to AUA. In Caldivirga maquilingensis (strain ATCC 700844 / DSM 13496 / JCM 10307 / IC-167), this protein is tRNA(Ile2) 2-agmatinylcytidine synthetase TiaS.